A 165-amino-acid chain; its full sequence is Ubiquitin-fold modifier-conjugating enzyme 1 (165 aa).

C116 acts as the Glycyl thioester intermediate in catalysis.

The protein belongs to the ubiquitin-conjugating enzyme family. UFC1 subfamily.

Its function is as follows. E2-like enzyme which forms an intermediate with UFM1 via a thioester linkage. The protein is Ubiquitin-fold modifier-conjugating enzyme 1 of Drosophila mojavensis (Fruit fly).